We begin with the raw amino-acid sequence, 864 residues long: Leucine--tRNA ligase (864 aa).

The 'HIGH' region signature appears at Pro42–His52. The 'KMSKS' region signature appears at Lys624–Ser628. Residue Lys627 participates in ATP binding.

Belongs to the class-I aminoacyl-tRNA synthetase family.

The protein resides in the cytoplasm. It carries out the reaction tRNA(Leu) + L-leucine + ATP = L-leucyl-tRNA(Leu) + AMP + diphosphate. The sequence is that of Leucine--tRNA ligase from Burkholderia cenocepacia (strain HI2424).